Consider the following 126-residue polypeptide: Large ribosomal subunit protein eL14 (126 aa).

It belongs to the eukaryotic ribosomal protein eL14 family.

This Tetrahymena thermophila (strain SB210) protein is Large ribosomal subunit protein eL14 (RPL14).